Here is an 81-residue protein sequence, read N- to C-terminus: Short neurotoxin 1 (81 aa).

The signal sequence occupies residues 1–21 (MKTLLLTLVVVTIVCLDLGYT). Disulfide bonds link C24-C43, C38-C60, C62-C73, and C74-C79.

The protein belongs to the three-finger toxin family. Short-chain subfamily. Type I alpha-neurotoxin sub-subfamily. In terms of tissue distribution, expressed by the venom gland.

Its subcellular location is the secreted. Binds to muscle nicotinic acetylcholine receptor (nAChR) and inhibit acetylcholine from binding to the receptor, thereby impairing neuromuscular transmission. The chain is Short neurotoxin 1 from Hoplocephalus stephensii (Stephens's banded snake).